The chain runs to 469 residues: Septin homolog spn1 (469 aa).

Positions 1–58 are disordered; the sequence is MASMVLADGMPTVKDDSTRSRGSDVDSFTSTDNVTQINVEAAISENKNEEKPIQDNSE. Over residues 13-24 the composition is skewed to basic and acidic residues; the sequence is VKDDSTRSRGSD. Polar residues predominate over residues 26–38; the sequence is DSFTSTDNVTQIN. Residues 92-367 form the Septin-type G domain; sequence QGFNFNVLVL…EAYRTERLLS (276 aa). Residues 102–109 form a G1 motif region; that stretch reads GESGSGKS. GTP is bound by residues 102 to 109, threonine 139, glycine 165, 244 to 252, and arginine 317; these read GESGSGKS and KADTLTDDE. Residues 162-165 form a G3 motif region; sequence DTPG. A G4 motif region spans residues 243–246; it reads AKAD. Residues 383–469 adopt a coiled-coil conformation; that stretch reads SAKLEEERAL…NEKSKRKFFK (87 aa).

This sequence belongs to the TRAFAC class TrmE-Era-EngA-EngB-Septin-like GTPase superfamily. Septin GTPase family. In terms of assembly, component of the septin complex composed of two copies of each spn1, spn2, spn3 and spn4.

It localises to the cytoplasm. The protein resides in the cell cortex. In terms of biological role, plays a role in the cell cycle. Involved in a late stage of septum formation leading to the separation of the daughter cells. The chain is Septin homolog spn1 (spn1) from Schizosaccharomyces pombe (strain 972 / ATCC 24843) (Fission yeast).